Reading from the N-terminus, the 333-residue chain is Pantothenate synthetase (333 aa).

Methionine 27–histidine 34 provides a ligand contact to ATP. Histidine 34 (proton donor) is an active-site residue. Glutamine 61 serves as a coordination point for (R)-pantoate. Glutamine 61 provides a ligand contact to beta-alanine. Glycine 148–aspartate 151 contributes to the ATP binding site. Residue glutamine 154 coordinates (R)-pantoate. Residues valine 177 and leucine 185 to arginine 188 each bind ATP.

Belongs to the pantothenate synthetase family. In terms of assembly, homodimer.

The protein resides in the cytoplasm. It carries out the reaction (R)-pantoate + beta-alanine + ATP = (R)-pantothenate + AMP + diphosphate + H(+). The protein operates within cofactor biosynthesis; (R)-pantothenate biosynthesis; (R)-pantothenate from (R)-pantoate and beta-alanine: step 1/1. Catalyzes the condensation of pantoate with beta-alanine in an ATP-dependent reaction via a pantoyl-adenylate intermediate. In Streptomyces avermitilis (strain ATCC 31267 / DSM 46492 / JCM 5070 / NBRC 14893 / NCIMB 12804 / NRRL 8165 / MA-4680), this protein is Pantothenate synthetase.